A 305-amino-acid chain; its full sequence is UDP-3-O-acyl-N-acetylglucosamine deacetylase (305 aa).

Zn(2+) contacts are provided by His-78, His-237, and Asp-241. Residue His-264 is the Proton donor of the active site.

This sequence belongs to the LpxC family. Zn(2+) serves as cofactor.

The enzyme catalyses a UDP-3-O-[(3R)-3-hydroxyacyl]-N-acetyl-alpha-D-glucosamine + H2O = a UDP-3-O-[(3R)-3-hydroxyacyl]-alpha-D-glucosamine + acetate. It participates in glycolipid biosynthesis; lipid IV(A) biosynthesis; lipid IV(A) from (3R)-3-hydroxytetradecanoyl-[acyl-carrier-protein] and UDP-N-acetyl-alpha-D-glucosamine: step 2/6. In terms of biological role, catalyzes the hydrolysis of UDP-3-O-myristoyl-N-acetylglucosamine to form UDP-3-O-myristoylglucosamine and acetate, the committed step in lipid A biosynthesis. This is UDP-3-O-acyl-N-acetylglucosamine deacetylase from Burkholderia cenocepacia (strain ATCC BAA-245 / DSM 16553 / LMG 16656 / NCTC 13227 / J2315 / CF5610) (Burkholderia cepacia (strain J2315)).